The following is a 498-amino-acid chain: ATP synthase subunit beta, chloroplastic (498 aa).

Residue 172–179 coordinates ATP; it reads GGAGVGKT.

Belongs to the ATPase alpha/beta chains family. F-type ATPases have 2 components, CF(1) - the catalytic core - and CF(0) - the membrane proton channel. CF(1) has five subunits: alpha(3), beta(3), gamma(1), delta(1), epsilon(1). CF(0) has four main subunits: a(1), b(1), b'(1) and c(9-12).

It localises to the plastid. The protein localises to the chloroplast thylakoid membrane. It catalyses the reaction ATP + H2O + 4 H(+)(in) = ADP + phosphate + 5 H(+)(out). Produces ATP from ADP in the presence of a proton gradient across the membrane. The catalytic sites are hosted primarily by the beta subunits. In Nypa fruticans (Nypa palm), this protein is ATP synthase subunit beta, chloroplastic.